The following is a 962-amino-acid chain: Glycine dehydrogenase (decarboxylating) (962 aa).

Lys-709 carries the post-translational modification N6-(pyridoxal phosphate)lysine.

The protein belongs to the GcvP family. As to quaternary structure, the glycine cleavage system is composed of four proteins: P, T, L and H. The cofactor is pyridoxal 5'-phosphate.

The catalysed reaction is N(6)-[(R)-lipoyl]-L-lysyl-[glycine-cleavage complex H protein] + glycine + H(+) = N(6)-[(R)-S(8)-aminomethyldihydrolipoyl]-L-lysyl-[glycine-cleavage complex H protein] + CO2. The glycine cleavage system catalyzes the degradation of glycine. The P protein binds the alpha-amino group of glycine through its pyridoxal phosphate cofactor; CO(2) is released and the remaining methylamine moiety is then transferred to the lipoamide cofactor of the H protein. In Shewanella sediminis (strain HAW-EB3), this protein is Glycine dehydrogenase (decarboxylating).